We begin with the raw amino-acid sequence, 1130 residues long: Sodium/potassium/calcium exchanger 1 (1130 aa).

The Extracellular portion of the chain corresponds to 1 to 419 (MGKLIRMGTQ…DLFSVEDRRQ (419 aa)). The tract at residues 104 to 209 (PSIAMEDTPN…SPTATVRDRE (106 aa)) is disordered. The segment covering 125–136 (LKNSYSPTTAGT) has biased composition (polar residues). The span at 170 to 187 (PRGERKNSSPTHAREKGR) shows a compositional bias: basic and acidic residues. Asn176 and Asn273 each carry an N-linked (GlcNAc...) asparagine glycan. Residues 274–295 (ISTTPQGAVPQHTPATSEEQMT) are disordered. Residues 286–295 (TPATSEEQMT) show a composition bias toward polar residues. The chain crosses the membrane as a helical span at residues 420-440 (GWVVLHIFGMMYVFVALAIVC). Residues 441–464 (DEYFVPALGVITHKLQISEDVAGA) are Cytoplasmic-facing. An Alpha-1 repeat occupies 461–501 (VAGATFMAAGGSAPELFTSLIGVFISHSNVGIGTIVGSAVF). The helical transmembrane segment at 465 to 485 (TFMAAGGSAPELFTSLIGVFI) threads the bilayer. Residues 486–489 (SHSN) lie on the Extracellular side of the membrane. Residues 490 to 510 (VGIGTIVGSAVFNILFVIGTC) traverse the membrane as a helical segment. The Cytoplasmic segment spans residues 511-530 (ALFSREILNLTWWPLFRDVS). The helical transmembrane segment at 531–551 (FYILDLSMLIVFFLDSFIAWW) threads the bilayer. Position 552 (Glu552) is a topological domain, extracellular. Residues 553–573 (SLLLLLAYALYVFTMKWNKQI) traverse the membrane as a helical segment. Residues 574–938 (ELWVKEQLSR…SLEWPDSRQK (365 aa)) lie on the Cytoplasmic side of the membrane. The disordered stretch occupies residues 598–619 (PSEDAVEENEQQDSKKLKLPSV). Position 625 is a phosphoserine (Ser625). The interval 650-932 (GEARPSKDKQ…ENEEPLSLEW (283 aa)) is disordered. The span at 661-675 (SLNQEARVLSQTKAE) shows a compositional bias: polar residues. The residue at position 690 (Thr690) is a Phosphothreonine. Positions 703–715 (QEDDPGCQEDVDE) are enriched in acidic residues. Residues 730–751 (ETETEGKKDEQEGETEAERKED) show a composition bias toward basic and acidic residues. 2 stretches are compositionally biased toward acidic residues: residues 766 to 782 (GETE…GETE) and 802 to 820 (QEGE…GETE). Residues 833 to 855 (AESKEVEQERETEAEGKDKHEGQ) are compositionally biased toward basic and acidic residues. 2 stretches are compositionally biased toward acidic residues: residues 870 to 880 (GETEANAEDQC) and 896 to 928 (DGGD…EEPL). Residues 939-959 (QAIYLFLLPIVFPLWLTIPDV) traverse the membrane as a helical segment. Topologically, residues 960–966 (RRQESRK) are extracellular. The chain crosses the membrane as a helical span at residues 967 to 987 (FFVITFLGSIIWIAMFSYLMV). Over 988–1002 (WWAHQVGETIGISEE) the chain is Cytoplasmic. The helical transmembrane segment at 1003 to 1023 (IMGLTILAAGTSIPDLITSVI) threads the bilayer. An Alpha-2 repeat occupies 1010–1041 (AAGTSIPDLITSVIVARKGLGDMAVSSSVGSN). Residues 1024–1041 (VARKGLGDMAVSSSVGSN) are Extracellular-facing. The chain crosses the membrane as a helical span at residues 1042–1062 (IFDITVGLPVPWLLFSLINAL). Topologically, residues 1063 to 1070 (QPVPVSSN) are cytoplasmic. A helical transmembrane segment spans residues 1071–1091 (GLFCAIVLLFLMLLFVIFSIA). Topologically, residues 1092 to 1099 (SCKWRMNK) are extracellular. The helical transmembrane segment at 1100–1120 (ILGFTMFLLYFVFLVISVMLE) threads the bilayer. Residues 1121–1130 (DRIISCPVSV) are Cytoplasmic-facing.

Belongs to the Ca(2+):cation antiporter (CaCA) (TC 2.A.19) family. SLC24A subfamily. In terms of processing, the uncleaved signal sequence is required for efficient membrane targeting and proper membrane integration and topology.

It localises to the cell membrane. The catalysed reaction is Ca(2+)(out) + K(+)(out) + 4 Na(+)(in) = Ca(2+)(in) + K(+)(in) + 4 Na(+)(out). Functionally, calcium, potassium:sodium antiporter that transports 1 Ca(2+) and 1 K(+) in exchange for 4 Na(+). Critical component of the visual transduction cascade, controlling the calcium concentration of outer segments during light and darkness. Light causes a rapid lowering of cytosolic free calcium in the outer segment of both retinal rod and cone photoreceptors and the light-induced lowering of calcium is caused by extrusion via this protein which plays a key role in the process of light adaptation. This is Sodium/potassium/calcium exchanger 1 from Mus musculus (Mouse).